The sequence spans 183 residues: NAD(P)H-quinone oxidoreductase subunit J (183 aa).

The tract at residues methionine 1–proline 21 is disordered.

It belongs to the complex I 30 kDa subunit family. NDH-1 can be composed of about 15 different subunits; different subcomplexes with different compositions have been identified which probably have different functions.

It localises to the cellular thylakoid membrane. The enzyme catalyses a plastoquinone + NADH + (n+1) H(+)(in) = a plastoquinol + NAD(+) + n H(+)(out). It catalyses the reaction a plastoquinone + NADPH + (n+1) H(+)(in) = a plastoquinol + NADP(+) + n H(+)(out). Functionally, NDH-1 shuttles electrons from an unknown electron donor, via FMN and iron-sulfur (Fe-S) centers, to quinones in the respiratory and/or the photosynthetic chain. The immediate electron acceptor for the enzyme in this species is believed to be plastoquinone. Couples the redox reaction to proton translocation, and thus conserves the redox energy in a proton gradient. Cyanobacterial NDH-1 also plays a role in inorganic carbon-concentration. The protein is NAD(P)H-quinone oxidoreductase subunit J of Synechococcus sp. (strain JA-2-3B'a(2-13)) (Cyanobacteria bacterium Yellowstone B-Prime).